The sequence spans 409 residues: Phosphatidylserine decarboxylase proenzyme, mitochondrial (409 aa).

A mitochondrion-targeting transit peptide spans 1–52 (MAASVCRPYVRSLPGVMPWRSSSCHYEYTAMHHFLGSFQKLPFEPFNTGARK). Over 53–63 (IHTAPVRSLFL) the chain is Mitochondrial matrix. Residues 64-82 (LRPVPILLATGGGYAGYRQ) form a helical membrane-spanning segment. The Mitochondrial intermembrane segment spans residues 83–409 (YEKYRDQKLE…IRFGEALGSL (327 aa)). Active-site charge relay system; for autoendoproteolytic cleavage activity residues include aspartate 191, histidine 267, and serine 378. Residue serine 378 is the Schiff-base intermediate with substrate; via pyruvic acid; for decarboxylase activity of the active site. Serine 378 carries the post-translational modification Pyruvic acid (Ser); by autocatalysis.

It belongs to the phosphatidylserine decarboxylase family. PSD-B subfamily. Eukaryotic type I sub-subfamily. Heterodimer of a large membrane-associated beta subunit and a small pyruvoyl-containing alpha subunit. The cofactor is pyruvate. Post-translationally, is synthesized initially as an inactive proenzyme. Formation of the active enzyme involves a self-maturation process in which the active site pyruvoyl group is generated from an internal serine residue via an autocatalytic post-translational modification. Two non-identical subunits are generated from the proenzyme in this reaction, and the pyruvate is formed at the N-terminus of the alpha chain, which is derived from the carboxyl end of the proenzyme. The autoendoproteolytic cleavage occurs by a canonical serine protease mechanism, in which the side chain hydroxyl group of the serine supplies its oxygen atom to form the C-terminus of the beta chain, while the remainder of the serine residue undergoes an oxidative deamination to produce ammonia and the pyruvoyl prosthetic group on the alpha chain. During this reaction, the Ser that is part of the protease active site of the proenzyme becomes the pyruvoyl prosthetic group, which constitutes an essential element of the active site of the mature decarboxylase.

The protein localises to the mitochondrion inner membrane. Its subcellular location is the cytoplasm. It localises to the lipid droplet. It carries out the reaction a 1,2-diacyl-sn-glycero-3-phospho-L-serine + H(+) = a 1,2-diacyl-sn-glycero-3-phosphoethanolamine + CO2. The protein operates within phospholipid metabolism; phosphatidylethanolamine biosynthesis. Functionally, catalyzes the formation of phosphatidylethanolamine (PtdEtn) from phosphatidylserine (PtdSer). Plays a central role in phospholipid metabolism and in the interorganelle trafficking of phosphatidylserine. May be involved in lipid droplet biogenesis at the endoplasmic reticulum membrane. This is Phosphatidylserine decarboxylase proenzyme, mitochondrial from Cricetulus griseus (Chinese hamster).